A 228-amino-acid polypeptide reads, in one-letter code: L-ribulose-5-phosphate 4-epimerase UlaF (228 aa).

Substrate contacts are provided by residues 26–27 (GN), 43–44 (SG), and 72–73 (SS). 3 residues coordinate Zn(2+): Asp-74, His-93, and His-95. Asp-118 acts as the Proton donor/acceptor in catalysis. Zn(2+) is bound at residue His-167. Tyr-225 serves as the catalytic Proton donor/acceptor.

The protein belongs to the aldolase class II family. AraD/FucA subfamily. Zn(2+) serves as cofactor.

It catalyses the reaction L-ribulose 5-phosphate = D-xylulose 5-phosphate. It participates in cofactor degradation; L-ascorbate degradation; D-xylulose 5-phosphate from L-ascorbate: step 4/4. In terms of biological role, catalyzes the isomerization of L-ribulose 5-phosphate to D-xylulose 5-phosphate. Is involved in the anaerobic L-ascorbate utilization. This Escherichia coli (strain SMS-3-5 / SECEC) protein is L-ribulose-5-phosphate 4-epimerase UlaF.